We begin with the raw amino-acid sequence, 372 residues long: Spermidine/putrescine import ATP-binding protein PotA (372 aa).

Residues 11–241 form the ABC transporter domain; the sequence is IELRSITKSY…PANLFVARFI (231 aa). 43 to 50 lines the ATP pocket; sequence GPSGCGKT.

It belongs to the ABC transporter superfamily. Spermidine/putrescine importer (TC 3.A.1.11.1) family. The complex is composed of two ATP-binding proteins (PotA), two transmembrane proteins (PotB and PotC) and a solute-binding protein (PotD).

The protein resides in the cell inner membrane. The enzyme catalyses ATP + H2O + polyamine-[polyamine-binding protein]Side 1 = ADP + phosphate + polyamineSide 2 + [polyamine-binding protein]Side 1.. Functionally, part of the ABC transporter complex PotABCD involved in spermidine/putrescine import. Responsible for energy coupling to the transport system. This Aggregatibacter actinomycetemcomitans (Actinobacillus actinomycetemcomitans) protein is Spermidine/putrescine import ATP-binding protein PotA.